A 143-amino-acid chain; its full sequence is Small ribosomal subunit protein uS12 (143 aa).

A compositionally biased stretch (basic residues) spans 1-15; that stretch reads MGKCRGLRTARKLRD. The tract at residues 1-27 is disordered; the sequence is MGKCRGLRTARKLRDHRREQKWHDKQY. The segment covering 16 to 27 has biased composition (basic and acidic residues); that stretch reads HRREQKWHDKQY.

The protein belongs to the universal ribosomal protein uS12 family. Component of the 40S small ribosomal subunit.

The protein localises to the cytoplasm. It localises to the cytosol. Its subcellular location is the rough endoplasmic reticulum. This chain is Small ribosomal subunit protein uS12 (rps23), found in Ictalurus punctatus (Channel catfish).